Here is a 91-residue protein sequence, read N- to C-terminus: RNA-binding protein Hfq (91 aa).

One can recognise a Sm domain in the interval 9–68 (DPYLNALRRERIPVSIYLVNGIKLQGQIESFDQFVILLKNTVNQMVYKHAISTVVPARSV). Positions 68 to 91 (VSHHNNNHHTTPTEAVENVETQAE) are disordered.

It belongs to the Hfq family. As to quaternary structure, homohexamer.

Functionally, RNA chaperone that binds small regulatory RNA (sRNAs) and mRNAs to facilitate mRNA translational regulation in response to envelope stress, environmental stress and changes in metabolite concentrations. Also binds with high specificity to tRNAs. The chain is RNA-binding protein Hfq from Haemophilus influenzae (strain 86-028NP).